Here is a 2210-residue protein sequence, read N- to C-terminus: Genome polyprotein (2210 aa).

The tract at residues 1 to 22 is disordered; the sequence is MAPVVSRDRHRHKIPKPHQPAP. The SF3 helicase domain maps to 426–585; it reads SSKIMELSTI…ADFLRQHPGV (160 aa). 456–463 is a binding site for ATP; sequence GPPGHGKS. Position 940 is an O-(5'-phospho-RNA)-tyrosine (Tyr940). The 146-residue stretch at 991–1136 folds into the Peptidase C24 domain; the sequence is GNNCEDLPLH…KVFTPITDAP (146 aa). Active-site for 3CLpro activity residues include His1025, Asp1039, and Cys1103. The RdRp catalytic domain occupies 1379-1501; the sequence is DHCLELDYSK…TIPSHLTKSI (123 aa). Residues 1654-1686 are disordered; sequence SDLIREGNMSDNKSTPEQQHESSRAMDAGATGA.

Post-translationally, specific enzymatic cleavages by its own cysteine protease yield mature proteins. The protease cleaves itself from the nascent polyprotein autocatalytically. Precursor p41 can be cleaved by viral 3CLpro into protein p19 and VPg, or cleaved by host protease into protein p23/2 and protein p18. In terms of processing, VPg is uridylylated by the polymerase and is covalently attached to the 5'-end of the polyadenylated genomic and subgenomic RNAs. This uridylylated form acts as a nucleotide-peptide primer for the polymerase.

The protein resides in the virion. It is found in the host cytoplasm. The enzyme catalyses a ribonucleoside 5'-triphosphate + H2O = a ribonucleoside 5'-diphosphate + phosphate + H(+). It carries out the reaction Endopeptidase with a preference for cleavage when the P1 position is occupied by Glu-|-Xaa and the P1' position is occupied by Gly-|-Yaa.. It catalyses the reaction RNA(n) + a ribonucleoside 5'-triphosphate = RNA(n+1) + diphosphate. Functionally, displays NTPase activity, but no helicase activity. Induces the formation of convoluted membranes derived from the host ER. These remodeled membranes probably form the viral factories that contain the replication complex. Together with NS2 and NS4, initiates the formation of the replication complex. Its function is as follows. Viral genome-linked protein is covalently linked to the 5'-end of the positive-strand, negative-strand genomic RNAs and subgenomic RNA. Acts as a genome-linked replication primer. May recruit ribosome to viral RNA thereby promoting viral proteins translation. Interacts with host translation initiation complex to allow the translation of viral proteins. In terms of biological role, processes the polyprotein. 3CLpro-RdRp is first released by autocleavage, then all other proteins are cleaved. May cleave polyadenylate-binding protein thereby inhibiting cellular translation. Replicates genomic and antigenomic RNA by recognizing replications specific signals. Also transcribes a subgenomic mRNA by initiating RNA synthesis internally on antigenomic RNA. This sgRNA codes for structural proteins. Catalyzes the covalent attachment VPg with viral RNAs. Functionally, capsid protein self assembles to form an icosahedral capsid with a T=3 symmetry, about 35 nm in diameter, and consisting of 180 capsid proteins. A smaller form of capsid with a diameter of 23 nm might be capsid proteins assembled as icosahedron with T=1 symmetry. The capsid encapsulate VP2 proteins and genomic or subgenomic RNA. Attaches virion to target cells by binding histo-blood group antigens, inducing endocytosis of the viral particle. Acidification of the endosome induces conformational change of capsid protein thereby injecting virus genomic RNA into host cytoplasm. This is Genome polyprotein from Bos taurus (Bovine).